Reading from the N-terminus, the 241-residue chain is Chalcone--flavanone isomerase C (241 aa).

The substrate site is built by Thr-50, Asn-115, and Ser-192.

Belongs to the chalcone isomerase family.

The enzyme catalyses a chalcone = a flavanone.. It functions in the pathway secondary metabolite biosynthesis; flavonoid biosynthesis. In terms of biological role, catalyzes the intramolecular cyclization of bicyclic chalcones into tricyclic (S)-flavanones. Responsible for the isomerization of 4,2',4',6'-tetrahydroxychalcone (also termed chalcone) into naringenin. This chain is Chalcone--flavanone isomerase C (CHI3), found in Petunia hybrida (Petunia).